The primary structure comprises 601 residues: Glutathione-regulated potassium-efflux system protein KefB (601 aa).

The next 13 membrane-spanning stretches (helical) occupy residues 4–24 (SDFL…VPLA), 29–49 (IGAV…GLGF), 55–75 (EILH…GLEL), 87–107 (IFGV…GLLM), 115–135 (AAVV…LQLM), 152–172 (VLLF…LLAG), 177–197 (HFDW…LIGG), 207–227 (FIAA…LVLG), 230–250 (LFMD…GVLL), 268–288 (GLLL…GVLY), 291–311 (LLWV…VLYL), 324–344 (MQFA…FSSA), and 356–376 (ALLL…MKLV). One can recognise an RCK N-terminal domain in the interval 400-519 (KPQVIVVGFG…AGVTQFSRET (120 aa)).

The protein belongs to the monovalent cation:proton antiporter 2 (CPA2) transporter (TC 2.A.37) family. KefB subfamily. Interacts with the regulatory subunit KefG.

The protein resides in the cell inner membrane. Its function is as follows. Pore-forming subunit of a potassium efflux system that confers protection against electrophiles. Catalyzes K(+)/H(+) antiport. This Escherichia coli O127:H6 (strain E2348/69 / EPEC) protein is Glutathione-regulated potassium-efflux system protein KefB.